The chain runs to 200 residues: MTSDFIYPEAQSIAGVDEVGRGPLAGPVVTAAVILDPKNPIIGLADSKTLSKKKRMALYEEITHKALAWSLGRAESKEIDEINIFHATLLAMQRAVNALGIKTDHVLIDGHICPILSIPSSSIVKGDSKVPEISAASILAKVTRDREMEALDKVFPGYGFAQHKGYPTAFHLEKLALLGPTEQHRRSFRPVRRALISLTG.

The RNase H type-2 domain occupies 11–200 (QSIAGVDEVG…VRRALISLTG (190 aa)). The a divalent metal cation site is built by D17, E18, and D109.

It belongs to the RNase HII family. The cofactor is Mn(2+). Mg(2+) serves as cofactor.

The protein resides in the cytoplasm. It catalyses the reaction Endonucleolytic cleavage to 5'-phosphomonoester.. Its function is as follows. Endonuclease that specifically degrades the RNA of RNA-DNA hybrids. The polypeptide is Ribonuclease HII (Hamiltonella defensa subsp. Acyrthosiphon pisum (strain 5AT)).